Here is a 341-residue protein sequence, read N- to C-terminus: S-adenosylmethionine:tRNA ribosyltransferase-isomerase (341 aa).

Belongs to the QueA family. As to quaternary structure, monomer.

The protein localises to the cytoplasm. It catalyses the reaction 7-aminomethyl-7-carbaguanosine(34) in tRNA + S-adenosyl-L-methionine = epoxyqueuosine(34) in tRNA + adenine + L-methionine + 2 H(+). The protein operates within tRNA modification; tRNA-queuosine biosynthesis. In terms of biological role, transfers and isomerizes the ribose moiety from AdoMet to the 7-aminomethyl group of 7-deazaguanine (preQ1-tRNA) to give epoxyqueuosine (oQ-tRNA). This is S-adenosylmethionine:tRNA ribosyltransferase-isomerase from Staphylococcus epidermidis (strain ATCC 35984 / DSM 28319 / BCRC 17069 / CCUG 31568 / BM 3577 / RP62A).